The following is a 202-amino-acid chain: Ribosome maturation factor RimM (202 aa).

A PRC barrel domain is found at 121–202 (ADEYYWVDLI…CITVDWQPDY (82 aa)).

This sequence belongs to the RimM family. As to quaternary structure, binds ribosomal protein uS19.

The protein resides in the cytoplasm. An accessory protein needed during the final step in the assembly of 30S ribosomal subunit, possibly for assembly of the head region. Essential for efficient processing of 16S rRNA. May be needed both before and after RbfA during the maturation of 16S rRNA. It has affinity for free ribosomal 30S subunits but not for 70S ribosomes. This chain is Ribosome maturation factor RimM, found in Polaromonas naphthalenivorans (strain CJ2).